Here is a 39-residue protein sequence, read N- to C-terminus: Cytochrome b6-f complex subunit 5 (39 aa).

A helical membrane pass occupies residues 5 to 25; it reads LLCGIVLGLVPVTLLGLFVSA.

It belongs to the PetG family. The 4 large subunits of the cytochrome b6-f complex are cytochrome b6, subunit IV (17 kDa polypeptide, PetD), cytochrome f and the Rieske protein, while the 4 small subunits are PetG, PetL, PetM and PetN. The complex functions as a dimer.

The protein localises to the cellular thylakoid membrane. Its function is as follows. Component of the cytochrome b6-f complex, which mediates electron transfer between photosystem II (PSII) and photosystem I (PSI), cyclic electron flow around PSI, and state transitions. PetG is required for either the stability or assembly of the cytochrome b6-f complex. This is Cytochrome b6-f complex subunit 5 from Prochlorococcus marinus (strain NATL1A).